The sequence spans 1368 residues: Alpha-latrotoxin-Lg1a (1368 aa).

Residues 217 to 236 (VLYAILYGTQTYVSVMFFLL) are helix H8 is the probable transmembrane region of the tetrameric pore inserted in the target cell membrane. A disulfide bond links cysteine 392 and cysteine 1044. ANK repeat units follow at residues 469–500 (QGRT…DINQ), 504–533 (KGYT…SVNS), 538–568 (FLQT…NINE), 572–601 (DGFT…DVNV), 605–635 (KGLT…DINA), 639–669 (NNMT…NANA), 674–704 (GLLS…NYNL), 708–737 (GDIT…NINQ), 741–770 (EKYT…NLEA), 774–803 (TGAT…NWRE), 807–837 (NGQM…VLDI), 841–870 (NLDT…KVNT), 874–903 (KGQA…NVYI), 907–936 (DGLN…KFEW), 953–981 (ISHF…GHYS), 982–1011 (ICSP…SVDG), 1013–1042 (KPDT…KVNH), 1046–1075 (NGMT…DFRR), 1079–1109 (LDAT…NINI), and 1115–1144 (NKET…DENI). Residues 1174–1177 (KFRR) form a furin-like endopeptidase recognition region region. A propeptide spanning residues 1178 to 1368 (EYKSSNGEHD…GETLHLFHES (191 aa)) is cleaved from the precursor.

It belongs to the cationic peptide 01 (latrotoxin) family. 03 (alpha-latrotoxin) subfamily. As to quaternary structure, homotetramer in membranes. Expressed in venom gland, cephalothorax, and abdomen tissues from both males and females.

The protein resides in the secreted. Its subcellular location is the target cell membrane. Its function is as follows. Presynaptic neurotoxin that causes massive release of neurotransmitters from vertebrate (but not invertebrate) nerve terminals and endocrine cells via a complex mechanism involving activation of receptor(s) and toxin insertion into the plasma membrane with subsequent pore formation. Binds to neurexin-1-alpha (NRXN1) in a calcium dependent manner, adhesion G protein-coupled receptor L1 (ADGRL1, also termed latrophilin-1 and calcium-independent receptor of latrotoxin (CIRL)), and receptor-type tyrosine-protein phosphatase S (PTPRS), also termed PTP sigma. NRXN1 and PTPRS are suggested to provide a platform for binding and subsequent pore formation events. In contrast, binding to ADGRL1 does not involve oligomerization and channel formation, but direct downstream stimulation of the synaptic fusion machinery. The chain is Alpha-latrotoxin-Lg1a from Latrodectus geometricus (Brown widow spider).